Consider the following 270-residue polypeptide: Exosome complex component rrp43 (270 aa).

This sequence belongs to the RNase PH family. Component of the RNA exosome complex. Specifically part of the catalytically inactive RNA exosome core complex (Exo-9) which may associate with the catalytic subunits rrp66 and dis3 in cytoplasmic- and nuclear-specific RNA exosome complex forms. Exo-9 is formed by a hexameric base ring of RNase PH domain-containing subunits and a cap ring consisting of csl4, rrp4 and rrp40.

The protein resides in the cytoplasm. The protein localises to the nucleus. It localises to the nucleolus. Non-catalytic component of the RNA exosome complex which has 3'-&gt;5' exoribonuclease activity and participates in a multitude of cellular RNA processing and degradation events. In the nucleus, the RNA exosome complex is involved in proper maturation of stable RNA species such as rRNA, snRNA and snoRNA, in the elimination of RNA processing by-products and non-coding 'pervasive' transcripts, such as antisense RNA species and cryptic unstable transcripts (CUTs), and of mRNAs with processing defects, thereby limiting or excluding their export to the cytoplasm. In the cytoplasm, the RNA exosome complex is involved in general mRNA turnover and in RNA surveillance pathways, preventing translation of aberrant mRNAs. The catalytic inactive RNA exosome core complex of 9 subunits (Exo-9) is proposed to play a pivotal role in the binding and presentation of RNA for ribonucleolysis, and to serve as a scaffold for the association with catalytic subunits and accessory proteins or complexes. ski6 is part of the hexameric ring of RNase PH domain-containing subunits proposed to form a central channel which threads RNA substrates for degradation. The sequence is that of Exosome complex component rrp43 (rrp43) from Schizosaccharomyces pombe (strain 972 / ATCC 24843) (Fission yeast).